Consider the following 239-residue polypeptide: Lytic polysaccharide monooxygenase-like protein X325 (239 aa).

The N-terminal stretch at Met-1–Ala-24 is a signal peptide. His-25 provides a ligand contact to Cu(2+). Residues Asn-41, Asn-56, Asn-79, Asn-117, Asn-150, and Asn-197 are each glycosylated (N-linked (GlcNAc...) asparagine). Disulfide bonds link Cys-71–Cys-176 and Cys-141–Cys-195. Ser-214 is lipidated: GPI-anchor amidated serine. Residues Ala-215–Met-239 constitute a propeptide, removed in mature form.

This sequence belongs to the X325 family. Cu(2+) serves as cofactor.

The protein localises to the cell membrane. In terms of biological role, lytic polysaccharide monooxygenase-like protein that has diverged to biological functions other than polysaccharide degradation since it does not perform oxidative cleavage of polysaccharides. Acts as a cell surface-bound protein that functions in the copper-accumulation pathway. May also act as the major cell wall sensor that regulates MAP kinase-dependent hyphal anastomosis, the fusion of hyphal cells. The protein is Lytic polysaccharide monooxygenase-like protein X325 of Aspergillus fumigatus (strain ATCC MYA-4609 / CBS 101355 / FGSC A1100 / Af293) (Neosartorya fumigata).